The chain runs to 78 residues: Acyl carrier protein AcpP (78 aa).

The Carrier domain occupies 2-77 (SDIAERVKKI…DAVKFIEKAQ (76 aa)). Residue serine 37 is modified to O-(pantetheine 4'-phosphoryl)serine.

It belongs to the acyl carrier protein (ACP) family. Post-translationally, 4'-phosphopantetheine is transferred from CoA to a specific serine of apo-ACP by AcpS. This modification is essential for activity because fatty acids are bound in thioester linkage to the sulfhydryl of the prosthetic group.

Its subcellular location is the cytoplasm. Its pathway is lipid metabolism; fatty acid biosynthesis. Its function is as follows. Carrier of the growing fatty acid chain in fatty acid biosynthesis. This Agrobacterium fabrum (strain C58 / ATCC 33970) (Agrobacterium tumefaciens (strain C58)) protein is Acyl carrier protein AcpP.